We begin with the raw amino-acid sequence, 315 residues long: Ribose-phosphate pyrophosphokinase (315 aa).

Residues 37–39 and 96–97 contribute to the ATP site; these read DGE and RQ. Mg(2+) contacts are provided by H131 and D170. K194 is an active-site residue. D-ribose 5-phosphate is bound by residues R196, D220, and 224 to 228; that span reads DTGGT.

It belongs to the ribose-phosphate pyrophosphokinase family. Class I subfamily. As to quaternary structure, homohexamer. It depends on Mg(2+) as a cofactor.

It is found in the cytoplasm. The catalysed reaction is D-ribose 5-phosphate + ATP = 5-phospho-alpha-D-ribose 1-diphosphate + AMP + H(+). It functions in the pathway metabolic intermediate biosynthesis; 5-phospho-alpha-D-ribose 1-diphosphate biosynthesis; 5-phospho-alpha-D-ribose 1-diphosphate from D-ribose 5-phosphate (route I): step 1/1. In terms of biological role, involved in the biosynthesis of the central metabolite phospho-alpha-D-ribosyl-1-pyrophosphate (PRPP) via the transfer of pyrophosphoryl group from ATP to 1-hydroxyl of ribose-5-phosphate (Rib-5-P). The sequence is that of Ribose-phosphate pyrophosphokinase from Yersinia pestis.